Reading from the N-terminus, the 134-residue chain is Small ribosomal subunit protein uS12 (134 aa).

The segment at 1–26 (MPTTQQLLRKGRTTLQKKSKVPALKG) is disordered. The span at 9-20 (RKGRTTLQKKSK) shows a compositional bias: basic residues. Position 89 is a 3-methylthioaspartic acid (Asp89). The segment at 103-134 (DTQGVKDRNKSRSKYGTKKPKAGAAAAGAKKK) is disordered. Residues 113–123 (SRSKYGTKKPK) are compositionally biased toward basic residues. The span at 124–134 (AGAAAAGAKKK) shows a compositional bias: low complexity.

The protein belongs to the universal ribosomal protein uS12 family. In terms of assembly, part of the 30S ribosomal subunit. Contacts proteins S8 and S17. May interact with IF1 in the 30S initiation complex.

Functionally, with S4 and S5 plays an important role in translational accuracy. Interacts with and stabilizes bases of the 16S rRNA that are involved in tRNA selection in the A site and with the mRNA backbone. Located at the interface of the 30S and 50S subunits, it traverses the body of the 30S subunit contacting proteins on the other side and probably holding the rRNA structure together. The combined cluster of proteins S8, S12 and S17 appears to hold together the shoulder and platform of the 30S subunit. This chain is Small ribosomal subunit protein uS12, found in Deinococcus geothermalis (strain DSM 11300 / CIP 105573 / AG-3a).